The following is a 433-amino-acid chain: Histone deacetylase RPD3 (433 aa).

Positions arginine 19–asparagine 331 are histone deacetylase. Histidine 151 is an active-site residue. The short motif at arginine 320–tyrosine 340 is the ESA1-RPD3 motif element. The disordered stretch occupies residues serine 388–tyrosine 433. Position 394 is a phosphothreonine (threonine 394). Serine 408 is modified (phosphoserine). The segment covering arginine 422–tyrosine 433 has biased composition (basic and acidic residues).

Belongs to the histone deacetylase family. HD type 1 subfamily. Component of the RPD3C(L) complex composed of at least ASH1, CTI6, DEP1, PHO23, RPD3, RXT2, RXT3, SAP30, SDS3, SIN3, UME1 and UME6. Component of the RPD3C(S) complex composed of at least EAF3, RCO1, RPD3, SIN3, and UME1. Interacts with cyclophilins CPR1, CPR6 and CPR7, with the kinase HOG1, and with ESS1, CYC8 and HAC1.

The protein resides in the cytoplasm. Its subcellular location is the nucleus. The catalysed reaction is N(6)-acetyl-L-lysyl-[histone] + H2O = L-lysyl-[histone] + acetate. Its function is as follows. Catalytic component of the RPD3 histone deacetylase (HDAC) complexes RPD3C(L) and RPD3C(S) responsible for the deacetylation of lysine residues on the N-terminal part of the core histones (H2A, H2B, H3 and H4). Histone deacetylation plays an important role in transcriptional regulation, cell cycle progression, DNA damage response, osmotic stress response and developmental events. Is involved in rDNA and telomere silencing and in double strand breaks repair. Required for both full transcription repression and activation of many genes including cell type-specific genes (STE6, TY2 and HO), cell differentiation-specific genes (SPO13), genes that respond to external signals (PHO5) and TRK2. The RPD3 complexes regulate also chromosomal replication timing. The polypeptide is Histone deacetylase RPD3 (RPD3) (Saccharomyces cerevisiae (strain ATCC 204508 / S288c) (Baker's yeast)).